A 1310-amino-acid polypeptide reads, in one-letter code: Cadherin-related family member 2 (1310 aa).

The first 20 residues, 1 to 20 (MAQLWLSCFLLPALVVSVAA), serve as a signal peptide directing secretion. The Extracellular segment spans residues 21 to 1154 (NVAPKFLANM…ESDLSKQLIS (1134 aa)). Cadherin domains follow at residues 27 to 124 (LANM…APVF), 125 to 241 (QNTA…DPQF), and 242 to 353 (VREF…KPEF). Residues Asn-29, Asn-134, Asn-182, Asn-188, Asn-195, Asn-300, Asn-355, Asn-371, Asn-401, Asn-460, Asn-565, Asn-600, Asn-616, Asn-632, Asn-680, Asn-696, Asn-701, Asn-775, Asn-821, Asn-871, Asn-877, Asn-911, Asn-932, and Asn-1107 are each glycosylated (N-linked (GlcNAc...) asparagine). Cadherin domains lie at 368–480 (AQVN…RPTF), 481–586 (PQSL…APVV), 586–695 (VSGS…LPIF), 696–808 (NQSS…PPTL), 810–928 (VASL…APYF), and 930–1058 (PENK…TPKE). A helical membrane pass occupies residues 1155-1175 (VIIGLGVALLLVLVIMTMAFV). At 1176-1310 (CVRKSYNRKL…TNAGLDTTDL (135 aa)) the chain is on the cytoplasmic side. Positions 1180–1310 (SYNRKLQAMK…TNAGLDTTDL (131 aa)) are mediates interaction with USH1C and MYO7B and is required for proper localization to microvilli tips and function in microvilli organization. At Ser-1248 the chain carries Phosphoserine. The segment covering 1259–1268 (NSQEIKEHRP) has biased composition (basic and acidic residues). The disordered stretch occupies residues 1259-1310 (NSQEIKEHRPPHTPPEPDPEPLSVVLLGRQAGASGQLEGPSYTNAGLDTTDL). Ser-1299 is modified (phosphoserine). The segment covering 1299 to 1310 (SYTNAGLDTTDL) has biased composition (polar residues).

In terms of assembly, part of the IMAC/intermicrovillar adhesion complex/intermicrovillar tip-link complex composed of ANKS4B, MYO7B, USH1C, CDHR2 and CDHR5. Interacts with MAST2. Interacts (via cytoplasmic domain) with USH1C and MYO7B; required for proper localization of CDHR2 to microvilli tips and its function in brush border differentiation. Highly expressed in liver, kidney and colon. Moderately expressed in small intestine. Down-regulated in a number of liver and colon cancers. Expressed in duodenum with higher expression in enterocytes along the villus axis and lower expression in crypts (at protein level).

The protein resides in the apical cell membrane. The protein localises to the cell projection. It is found in the microvillus membrane. Its subcellular location is the cell junction. Intermicrovillar adhesion molecule that forms, via its extracellular domain, calcium-dependent heterophilic complexes with CDHR5 on adjacent microvilli. Thereby, controls the packing of microvilli at the apical membrane of epithelial cells. Through its cytoplasmic domain, interacts with microvillus cytoplasmic proteins to form the intermicrovillar adhesion complex/IMAC. This complex plays a central role in microvilli and epithelial brush border differentiation. May also play a role in cell-cell adhesion and contact inhibition in epithelial cells. This is Cadherin-related family member 2 from Homo sapiens (Human).